The primary structure comprises 382 residues: MSSKRKLFEEVGAAAATRPAAQPGLIDKRHSGARKAIRVWLQILFALVFIMIAVGGLTRLTDSGLSITEWRPLTGALPPLSEAEWQSEFEKYQAIDEFRIQNQWMQMADFKVIYWWEWGHRQLGRVIGVVWALGFGYFLVRRQVPAGWHGKLLFLGLLGGAQGAIGWWMVASGVTQGEGVTDVASYRLATHLGLAFVILGFIAWYIMELGRSAPDLMQARRIKEGKQWGMSTGLLHFTFLQILLGALVAGIDAGRSYTDWPMMGGQWFPSTALVLEPIWRNFFESPGLVQFMHRVTGYVLILFTVVVWLRGRRSSHPHTRFAFNAVLAAMTLQIVLGIVTVLYGAPAHIAIFHQTLAVIVWVLILRARFLSGYPIATSVRGT.

Transmembrane regions (helical) follow at residues 37-57 (IRVW…VGGL), 126-146 (VIGV…QVPA), 152-172 (LLFL…MVAS), 188-208 (LATH…YIME), 231-251 (STGL…VAGI), 288-308 (LVQF…VVVW), and 332-352 (LQIV…IAIF). Residue His-293 participates in heme binding. His-353 lines the heme pocket. A helical membrane pass occupies residues 356–376 (LAVIVWVLILRARFLSGYPIA).

Belongs to the COX15/CtaA family. Type 2 subfamily. Interacts with CtaB. Requires heme b as cofactor.

The protein resides in the cell membrane. It catalyses the reaction Fe(II)-heme o + 2 A + H2O = Fe(II)-heme a + 2 AH2. It participates in porphyrin-containing compound metabolism; heme A biosynthesis; heme A from heme O: step 1/1. In terms of biological role, catalyzes the conversion of heme O to heme A by two successive hydroxylations of the methyl group at C8. The first hydroxylation forms heme I, the second hydroxylation results in an unstable dihydroxymethyl group, which spontaneously dehydrates, resulting in the formyl group of heme A. The polypeptide is Heme A synthase (Roseobacter denitrificans (strain ATCC 33942 / OCh 114) (Erythrobacter sp. (strain OCh 114))).